We begin with the raw amino-acid sequence, 332 residues long: Probable cation efflux system protein MT2084 (332 aa).

Transmembrane regions (helical) follow at residues 46 to 66, 75 to 95, 113 to 133, 145 to 165, and 202 to 222; these read ISLLVLGLTALIQIVIVVMSG, IHNFADALTAVPLWIAFALGA, AGSFVVAMITMSAIIAGYEAI, VGWVALAGLVGFIGNEWVALY, and VALGFPLADPIVGLLITAAIL.

This sequence belongs to the cation diffusion facilitator (CDF) transporter (TC 2.A.4) family.

It localises to the cell membrane. In Mycobacterium tuberculosis (strain CDC 1551 / Oshkosh), this protein is Probable cation efflux system protein MT2084.